The following is a 134-amino-acid chain: Large ribosomal subunit protein bL20 (134 aa).

This sequence belongs to the bacterial ribosomal protein bL20 family.

Functionally, binds directly to 23S ribosomal RNA and is necessary for the in vitro assembly process of the 50S ribosomal subunit. It is not involved in the protein synthesizing functions of that subunit. This Sinorhizobium medicae (strain WSM419) (Ensifer medicae) protein is Large ribosomal subunit protein bL20.